A 119-amino-acid chain; its full sequence is UPF0102 protein SGR_1878 (119 aa).

The protein belongs to the UPF0102 family.

The sequence is that of UPF0102 protein SGR_1878 from Streptomyces griseus subsp. griseus (strain JCM 4626 / CBS 651.72 / NBRC 13350 / KCC S-0626 / ISP 5235).